The chain runs to 453 residues: tRNA modification GTPase MnmE (453 aa).

3 residues coordinate (6S)-5-formyl-5,6,7,8-tetrahydrofolate: Arg22, Glu79, and Lys119. Residues 215 to 376 (GMKVVIAGRP…LREHLKACMG (162 aa)) form the TrmE-type G domain. Asn225 is a K(+) binding site. Residues 225–230 (NAGKSS), 244–250 (TEIAGTT), 269–272 (DTAG), and 334–337 (NKAD) contribute to the GTP site. Residue Ser229 coordinates Mg(2+). 3 residues coordinate K(+): Thr244, Ile246, and Thr249. Thr250 contacts Mg(2+). (6S)-5-formyl-5,6,7,8-tetrahydrofolate is bound at residue Lys453.

Belongs to the TRAFAC class TrmE-Era-EngA-EngB-Septin-like GTPase superfamily. TrmE GTPase family. In terms of assembly, homodimer. Heterotetramer of two MnmE and two MnmG subunits. The cofactor is K(+).

It localises to the cytoplasm. In terms of biological role, exhibits a very high intrinsic GTPase hydrolysis rate. Involved in the addition of a carboxymethylaminomethyl (cmnm) group at the wobble position (U34) of certain tRNAs, forming tRNA-cmnm(5)s(2)U34. This is tRNA modification GTPase MnmE from Aeromonas hydrophila subsp. hydrophila (strain ATCC 7966 / DSM 30187 / BCRC 13018 / CCUG 14551 / JCM 1027 / KCTC 2358 / NCIMB 9240 / NCTC 8049).